Consider the following 87-residue polypeptide: UPF0250 protein ECA1299 (87 aa).

Belongs to the UPF0250 family.

The sequence is that of UPF0250 protein ECA1299 from Pectobacterium atrosepticum (strain SCRI 1043 / ATCC BAA-672) (Erwinia carotovora subsp. atroseptica).